The primary structure comprises 209 residues: Holliday junction branch migration complex subunit RuvA (209 aa).

The domain I stretch occupies residues 1 to 64; sequence MIGRIRGMLI…EDAQSLYGFA (64 aa). A domain II region spans residues 65–143; it reads SRLDRNLFRL…QLEGQFVPSQ (79 aa). The tract at residues 144-157 is flexible linker; that stretch reads PDVPTGAGAATASQ. The interval 158–209 is domain III; that stretch reads AGPDPREEAEAALIALGYKPQEAAKAISKVAGPDMNSETLIRLALKNMIPAG.

Belongs to the RuvA family. Homotetramer. Forms an RuvA(8)-RuvB(12)-Holliday junction (HJ) complex. HJ DNA is sandwiched between 2 RuvA tetramers; dsDNA enters through RuvA and exits via RuvB. An RuvB hexamer assembles on each DNA strand where it exits the tetramer. Each RuvB hexamer is contacted by two RuvA subunits (via domain III) on 2 adjacent RuvB subunits; this complex drives branch migration. In the full resolvosome a probable DNA-RuvA(4)-RuvB(12)-RuvC(2) complex forms which resolves the HJ.

It localises to the cytoplasm. The RuvA-RuvB-RuvC complex processes Holliday junction (HJ) DNA during genetic recombination and DNA repair, while the RuvA-RuvB complex plays an important role in the rescue of blocked DNA replication forks via replication fork reversal (RFR). RuvA specifically binds to HJ cruciform DNA, conferring on it an open structure. The RuvB hexamer acts as an ATP-dependent pump, pulling dsDNA into and through the RuvAB complex. HJ branch migration allows RuvC to scan DNA until it finds its consensus sequence, where it cleaves and resolves the cruciform DNA. This Marinobacter nauticus (strain ATCC 700491 / DSM 11845 / VT8) (Marinobacter aquaeolei) protein is Holliday junction branch migration complex subunit RuvA.